A 2609-amino-acid chain; its full sequence is Mycosubtilin synthase subunit C (2609 aa).

A domain 1 (D-serine-activating) region spans residues 258 to 1628 (PREKTIHQLF…RVCAQPEMTV (1371 aa)). The segment at 288 to 695 (TYQELNEKAN…HIPSIQESIV (408 aa)) is adenylation 1. Positions 771-845 (APRTELEKIL…ELVPYVEPVT (75 aa)) constitute a Carrier 1 domain. S806 carries the post-translational modification O-(pantetheine 4'-phosphoryl)serine. Positions 853–1312 (IKGPALLTPI…EISIDELDQF (460 aa)) are epimerization 1. The segment at 1322–1623 (IENIYPLTPM…NTIPVRVCAQ (302 aa)) is condensation 1. The tract at residues 1778–2359 (PKEKTIYQLF…AHAIQAAALP (582 aa)) is domain 2 (isoleucine-activating). The interval 1808-2205 (TYRQLNEQAN…LVESVKEAVV (398 aa)) is adenylation 2. The Carrier 2 domain occupies 2282–2357 (APRTLIEKQL…TMAHAIQAAA (76 aa)). At S2317 the chain carries O-(pantetheine 4'-phosphoryl)serine. Positions 2375-2581 (IPVFCFPPLI…ENMSTIRSIM (207 aa)) are thioesterase.

It belongs to the ATP-dependent AMP-binding enzyme family. The cofactor is pantetheine 4'-phosphate.

This protein is a multifunctional enzyme, able to activate and polymerize the amino acids Ser and Asn as part of the synthesis of mycosubtilin. The Ser residue is further epimerized to the D-isomer form. The activation sites for these amino acids consist of individual domains. This Bacillus subtilis protein is Mycosubtilin synthase subunit C (mycC).